The chain runs to 124 residues: Glycine cleavage system H protein (124 aa).

Residues 22–104 (LIVTGISDHA…YGKGWIYKMK (83 aa)) form the Lipoyl-binding domain. Lysine 63 bears the N6-lipoyllysine mark.

It belongs to the GcvH family. The glycine cleavage system is composed of four proteins: P, T, L and H. Requires (R)-lipoate as cofactor.

The glycine cleavage system catalyzes the degradation of glycine. The H protein shuttles the methylamine group of glycine from the P protein to the T protein. This is Glycine cleavage system H protein from Acinetobacter baylyi (strain ATCC 33305 / BD413 / ADP1).